A 642-amino-acid chain; its full sequence is Threonine--tRNA ligase (642 aa).

The TGS domain maps to 1 to 61; that stretch reads MPVITLPDGS…ETDAELSIIT (61 aa). Residues 243-534 form a catalytic region; it reads DHRKIGKQLD…LIEEYAGRFP (292 aa). Residues cysteine 334, histidine 385, and histidine 511 each coordinate Zn(2+).

This sequence belongs to the class-II aminoacyl-tRNA synthetase family. Homodimer. It depends on Zn(2+) as a cofactor.

It is found in the cytoplasm. The catalysed reaction is tRNA(Thr) + L-threonine + ATP = L-threonyl-tRNA(Thr) + AMP + diphosphate + H(+). Functionally, catalyzes the attachment of threonine to tRNA(Thr) in a two-step reaction: L-threonine is first activated by ATP to form Thr-AMP and then transferred to the acceptor end of tRNA(Thr). Also edits incorrectly charged L-seryl-tRNA(Thr). The protein is Threonine--tRNA ligase of Shewanella baltica (strain OS195).